The following is a 245-amino-acid chain: tRNA (guanine-N(1)-)-methyltransferase (245 aa).

S-adenosyl-L-methionine is bound by residues Gly-114 and 134 to 139; that span reads IGDYIL.

This sequence belongs to the RNA methyltransferase TrmD family. In terms of assembly, homodimer.

Its subcellular location is the cytoplasm. The catalysed reaction is guanosine(37) in tRNA + S-adenosyl-L-methionine = N(1)-methylguanosine(37) in tRNA + S-adenosyl-L-homocysteine + H(+). Its function is as follows. Specifically methylates guanosine-37 in various tRNAs. The chain is tRNA (guanine-N(1)-)-methyltransferase from Listeria monocytogenes serotype 4b (strain CLIP80459).